Consider the following 282-residue polypeptide: NH(3)-dependent NAD(+) synthetase (282 aa).

51-58 (GISGGVDS) contributes to the ATP binding site. D57 provides a ligand contact to Mg(2+). R148 is a deamido-NAD(+) binding site. Residue T168 participates in ATP binding. E173 lines the Mg(2+) pocket. Positions 181 and 188 each coordinate deamido-NAD(+). Positions 197 and 219 each coordinate ATP. Deamido-NAD(+) is bound at residue 268 to 269 (HK).

Belongs to the NAD synthetase family. As to quaternary structure, homodimer.

It carries out the reaction deamido-NAD(+) + NH4(+) + ATP = AMP + diphosphate + NAD(+) + H(+). The protein operates within cofactor biosynthesis; NAD(+) biosynthesis; NAD(+) from deamido-NAD(+) (ammonia route): step 1/1. Its function is as follows. Catalyzes the ATP-dependent amidation of deamido-NAD to form NAD. Uses ammonia as a nitrogen source. This Burkholderia lata (strain ATCC 17760 / DSM 23089 / LMG 22485 / NCIMB 9086 / R18194 / 383) protein is NH(3)-dependent NAD(+) synthetase.